Consider the following 92-residue polypeptide: Alpha-conotoxin-like Mi20.2 (92 aa).

An N-terminal signal peptide occupies residues 1–24 (MPKLEMMLLVLLILPLSSFSAAGE). A propeptide spanning residues 25–45 (QVVQGDQRSDGLARYLQRGGR) is cleaved from the precursor. Position 49 is a 4-carboxyglutamate (glutamate 49). 4-hydroxyproline is present on proline 55. Disulfide bonds link cysteine 63-cysteine 72, cysteine 68-cysteine 80, cysteine 73-cysteine 90, and cysteine 78-cysteine 92.

This sequence belongs to the conotoxin D superfamily. Hetero-, homo- or pseudo-homodimer (identical sequence, different post-translational modifications). As to expression, expressed by the venom duct.

The protein localises to the secreted. In terms of biological role, alpha-conotoxins act on postsynaptic membranes, they bind to the nicotinic acetylcholine receptors (nAChR) and thus inhibit them. Through its two C-terminal domains, this homodimeric protein would bind to two nAChR allosteric sites, located outside the nAChR C-loop of the principal binding face and at the adjacent binding interface in a clockwise direction. This toxin specifically blocks mammalian neuronal nAChR of the alpha-7/CHRNA7, alpha-3-beta-2/CHRNA3-CHRNB2 and alpha-4-beta-2/CHRNA4-CHRNB2 subtypes. This is Alpha-conotoxin-like Mi20.2 from Conus miles (Soldier cone).